The sequence spans 82 residues: RNA-binding protein Hfq (82 aa).

The Sm domain maps to 11 to 71 (DTFLNHVRKT…ISTIMPGAPI (61 aa)).

Belongs to the Hfq family. Homohexamer.

In terms of biological role, RNA chaperone that binds small regulatory RNA (sRNAs) and mRNAs to facilitate mRNA translational regulation in response to envelope stress, environmental stress and changes in metabolite concentrations. Also binds with high specificity to tRNAs. This Rhodopseudomonas palustris (strain BisA53) protein is RNA-binding protein Hfq.